A 438-amino-acid polypeptide reads, in one-letter code: MTIATERYSRSQANFAAAQAVIPGGVNSPVRAFRGVGGSPIFFERGQGAHIWDVDGNRYIDYVLSWGPLLLGHAHPAVVNAIATQAQRGTSFGAPTELETDLARLVLDLVPSIEQIRFVNSGTEATMSALRLARAATGRRLIVKFNGCYHGHADMLLVQAGSGVATLGLPDSPGVPPTVAADTITIEYNDLDAAADLFARRGSEIAAVIVEPIAANMGFVLPKPGFLSGLRELTQQHGAIFILDEVMTGFRVAPGGAQALWNLDPDLTCLGKVIGGGLPVGAYAGKRHLMQLVAPAGPMYQAGTLSGNPLAMIAGLTTLRTAFTDDNTAFQRAVTLTTRLANGLRELGERYRIPLQVGNVGTMFGCYFLRHADAQITNYVEAKANADTQRYARFFWAMADRGIYLAPSQFEAGFVSTAHTDADIDQTLTAVEEAFAQL.

An N6-(pyridoxal phosphate)lysine modification is found at Lys-272.

It belongs to the class-III pyridoxal-phosphate-dependent aminotransferase family. HemL subfamily. Homodimer. It depends on pyridoxal 5'-phosphate as a cofactor.

The protein localises to the cytoplasm. The catalysed reaction is (S)-4-amino-5-oxopentanoate = 5-aminolevulinate. It functions in the pathway porphyrin-containing compound metabolism; protoporphyrin-IX biosynthesis; 5-aminolevulinate from L-glutamyl-tRNA(Glu): step 2/2. It participates in porphyrin-containing compound metabolism; chlorophyll biosynthesis. This chain is Glutamate-1-semialdehyde 2,1-aminomutase, found in Chloroflexus aggregans (strain MD-66 / DSM 9485).